The sequence spans 256 residues: Nickel import ATP-binding protein NikD (256 aa).

The ABC transporter domain maps to 6–245 (LEIRGLRIET…PASATARTLL (240 aa)). An ATP-binding site is contributed by 38 to 45 (GASGSGKS).

Belongs to the ABC transporter superfamily. Nickel importer (TC 3.A.1.5.3) family. The complex is composed of two ATP-binding proteins (NikD and NikE), two transmembrane proteins (NikB and NikC) and a solute-binding protein (NikA).

The protein resides in the cell inner membrane. It catalyses the reaction Ni(2+)(out) + ATP + H2O = Ni(2+)(in) + ADP + phosphate + H(+). Its function is as follows. Part of the ABC transporter complex NikABCDE involved in nickel import. Responsible for energy coupling to the transport system. This is Nickel import ATP-binding protein NikD from Pseudomonas putida (strain ATCC 47054 / DSM 6125 / CFBP 8728 / NCIMB 11950 / KT2440).